The following is a 1325-amino-acid chain: Cellulose synthase 1 operon protein C (1325 aa).

Residues 1 to 30 form the signal peptide; sequence MNRRYVFSLSAGLLASSCMGAIMPVPVARA. TPR repeat units lie at residues 50-83, 85-117, 292-325, 326-359, 406-439, 558-591, 702-735, and 737-769; these read RQIL…APDA, DVLE…APGS, AGLA…NSHD, ADSL…DPKT, TGAT…DPNN, NDAA…KEDL, MGIA…DPEA, and SPKL…NPQD. The interval 838–886 is disordered; that stretch reads VEGSRSASGPAATEEDALAPPSSNPFRHHGYGRQTELGAPVTGGSYSME.

The protein belongs to the AcsC/BcsC family.

The protein resides in the cell outer membrane. It functions in the pathway glycan metabolism; bacterial cellulose biosynthesis. Its function is as follows. Required for maximal bacterial cellulose synthesis. It may be involved in the formation of a membrane complex for extrusion of the cellulose product. This is Cellulose synthase 1 operon protein C (bcsCI) from Komagataeibacter xylinus (Gluconacetobacter xylinus).